The chain runs to 210 residues: QAGYGNCQACCTGGQAGPPGMPGNPGRPGNPGAPGIPGNPGRPPVQPCDPIPIPPCKPCPQGRPGPPGPIGPPGEPGTPGNPGAPGNDAPPGPPGPKGPPGPPGKAGAPGAAGQPGANAPSEPLVPGPPGPPGPTGPEGPPGPNGAPGHPGAPGAPGEKGPRGQDGHPGAPGNAGHPGQPGQPGPPGERGVCPKYCSMDGGVFFEDGTRR.

Positions 11-210 (CTGGQAGPPG…GVFFEDGTRR (200 aa)) are disordered. 2 stretches are compositionally biased toward pro residues: residues 40–76 (PGRP…PGEP) and 88–103 (DAPP…PGPP). Low complexity predominate over residues 105-122 (KAGAPGAAGQPGANAPSE). Positions 123–144 (PLVPGPPGPPGPTGPEGPPGPN) are enriched in pro residues. Over residues 167 to 179 (HPGAPGNAGHPGQ) the composition is skewed to low complexity.

The protein belongs to the cuticular collagen family.

Nematode cuticles are composed largely of collagen-like proteins. The cuticle functions both as an exoskeleton and as a barrier to protect the worm from its environment. The chain is Cuticle collagen 2C (2C) from Haemonchus contortus (Barber pole worm).